We begin with the raw amino-acid sequence, 651 residues long: Forkhead box protein K2 (651 aa).

Low complexity predominate over residues Met1 to Pro13. A disordered region spans residues Met1 to Trp29. Positions Pro14–Pro26 are enriched in gly residues. Residue Ser24 is modified to Phosphoserine. An FHA domain is found at Val48–Gln119. The tract at residues Arg120–Pro162 is required for interaction with DVL2 and SUDS3. Arg135 carries the omega-N-methylarginine modification. 2 disordered regions span residues Ser150–Ser171 and Thr194–Pro251. Residues Lys152 and Lys155 each participate in a glycyl lysine isopeptide (Lys-Gly) (interchain with G-Cter in SUMO2) cross-link. The span at Thr194–Ser203 shows a compositional bias: polar residues. The residue at position 230 (Ser230) is a Phosphoserine. Residues Glu233–Lys249 are compositionally biased toward basic and acidic residues. The fork-head DNA-binding region spans Lys249–Arg344. The interval Lys291–Lys309 is DNA-binding; major groove. 4 residues coordinate Mg(2+): Leu301, Ser302, Asn304, and Phe307. 2 DNA-binding; minor groove regions span residues Lys319 to Trp323 and Arg339 to Arg344. A disordered region spans residues Arg350–Ala399. Ser364 is subject to Phosphoserine. Residues Ala373–Ser383 are compositionally biased toward polar residues. 3 positions are modified to phosphoserine: Ser389, Ser415, and Ser419. Lys518 participates in a covalent cross-link: Glycyl lysine isopeptide (Lys-Gly) (interchain with G-Cter in SUMO2). The residue at position 590 (Ser590) is a Phosphoserine. A compositionally biased stretch (polar residues) spans Ala601 to Gln614. The interval Ala601–Val623 is disordered. Lys624 participates in a covalent cross-link: Glycyl lysine isopeptide (Lys-Gly) (interchain with G-Cter in SUMO2).

Component of SIN3A-, but not SIN3B-, containing multiprotein complexes. Interacts with DVL1, DVL2 (when phosphorylated) and DVL3; the interaction induces DVL2 nuclear translocation. Interacts with SUDS3. Interacts with BAP1 (when phosphorylated); leading to recruit the PR-DUB complex and repress FOXK2 target genes. Accessory component of the polycomb repressive deubiquitinase (PR-DUB) complex, at least composed of BAP1, one of ASXL1, ASXL2 or (probably) ASXL3 and one of MBD5 or MBD6. The PR-DUB core associates with a number of accessory proteins, including FOXK1, FOXK2, KDM1B, HCFC1 and OGT. Hyperphosphorylated during mitosis by CDK1 and, to a lower extent, CDK2. Phosphorylation at Ser-364 and Ser-419 affects stability by promoting degradation. Expressed in a wide range of adult brain regions, namely the piriform cortex, the major islands of Calleja and cells lining the lateral ventricles, the bed nucleus of stria terminalis, the paraventricular thalamic nucleus, habenula and all structures of the hippocampus. Also present in the hypothalamus, cerebral cortex and in the Purkinje cell layer in the cerebellum. Additionally expressed in dopamine neurons of the substantia and more sparsely in the ventral tegmental area.

It localises to the nucleus. The protein localises to the cytoplasm. In terms of biological role, transcriptional regulator involved in different processes such as glucose metabolism, aerobic glycolysis and autophagy. Recognizes and binds the forkhead DNA sequence motif (5'-GTAAACA-3') and can both act as a transcription activator or repressor, depending on the context. Together with FOXK1, acts as a key regulator of metabolic reprogramming towards aerobic glycolysis, a process in which glucose is converted to lactate in the presence of oxygen. Acts by promoting expression of enzymes for glycolysis (such as hexokinase-2 (HK2), phosphofructokinase, pyruvate kinase (PKLR) and lactate dehydrogenase), while suppressing further oxidation of pyruvate in the mitochondria by up-regulating pyruvate dehydrogenase kinases PDK1 and PDK4. Probably plays a role in gluconeogenesis during overnight fasting, when lactate from white adipose tissue and muscle is the main substrate. Together with FOXK1, acts as a negative regulator of autophagy in skeletal muscle: in response to starvation, enters the nucleus, binds the promoters of autophagy genes and represses their expression, preventing proteolysis of skeletal muscle proteins. In addition to the 5'-GTAAACA-3' DNA motif, also binds the 5'-TGANTCA-3' palindromic DNA motif, and co-associates with JUN/AP-1 to activate transcription. Also able to bind to a minimal DNA heteroduplex containing a G/T-mismatch with 5'-TRT[G/T]NB-3' sequence. Binds to NFAT-like motifs (purine-rich) in the IL2 promoter. Positively regulates WNT/beta-catenin signaling by translocating DVL proteins into the nucleus. Accessory component of the polycomb repressive deubiquitinase (PR-DUB) complex; recruits the PR-DUB complex to specific FOXK2-bound genes. The chain is Forkhead box protein K2 from Mus musculus (Mouse).